The following is a 257-amino-acid chain: Ribonuclease PH (257 aa).

Phosphate-binding positions include arginine 87 and glycine 125–arginine 127.

This sequence belongs to the RNase PH family. As to quaternary structure, homohexameric ring arranged as a trimer of dimers.

The enzyme catalyses tRNA(n+1) + phosphate = tRNA(n) + a ribonucleoside 5'-diphosphate. Phosphorolytic 3'-5' exoribonuclease that plays an important role in tRNA 3'-end maturation. Removes nucleotide residues following the 3'-CCA terminus of tRNAs; can also add nucleotides to the ends of RNA molecules by using nucleoside diphosphates as substrates, but this may not be physiologically important. Probably plays a role in initiation of 16S rRNA degradation (leading to ribosome degradation) during starvation. This chain is Ribonuclease PH, found in Geobacillus kaustophilus (strain HTA426).